Consider the following 300-residue polypeptide: Protein THYLAKOID FORMATION 1, chloroplastic (300 aa).

The N-terminal 67 residues, 1–67, are a transit peptide targeting the chloroplast; the sequence is MAATAISSLS…SNVTADVPPV (67 aa). The Chloroplast intermembrane portion of the chain corresponds to 68-196; it reads SETKSKFLKA…IAGRAGSKEG (129 aa). The chain crosses the membrane as a helical span at residues 197-219; sequence FSYSRFFAVGLFRLLELASATDP. At 220–300 the chain is on the cytoplasmic side; the sequence is TVLDKLCASL…NPSFLVERKS (81 aa). A coiled-coil region spans residues 239-268; that stretch reads DLDVYRNLLSKLVQAKELLKEYVEREKKKQ.

It belongs to the THF1 family. In terms of assembly, interacts with GPA1. As to expression, ubiquitous. Present at higher level in hypocotyls (at protein level). Ubiquitously expressed in all organs, in roots of both light-grown and dark-grown seedlings. Highly expressed in the root apical meristems.

The protein resides in the plastid. Its subcellular location is the chloroplast outer membrane. It is found in the chloroplast stroma. Involved in a dynamic process of vesicle-mediated thylakoid membrane biogenesis. Required for the normal organization of vesicles into mature thylakoid stacks and ultimately for leaf development. Also involved in a sugar-signaling mechanism in roots by mediating signaling between the plasma membrane and the plastid. Probably acts downstream of the plasma membrane-delimited heterotrimeric G-protein GPA1 in a D-glucose signaling pathway. This is Protein THYLAKOID FORMATION 1, chloroplastic (THF1) from Arabidopsis thaliana (Mouse-ear cress).